Reading from the N-terminus, the 459-residue chain is E3 ubiquitin-protein ligase RNF14 (459 aa).

The 120-residue stretch at 10-129 (DELLALASIY…QFLKEETLDF (120 aa)) folds into the RWD domain. The tract at residues 141–169 (SGSQPQCEPAQKHAADASGEKSKVQDLDP) is disordered. Basic and acidic residues predominate over residues 150–169 (AQKHAADASGEKSKVQDLDP). The tract at residues 200–441 (KAFCCGICYS…NPDSPCYNQL (242 aa)) is TRIAD supradomain. Zn(2+) is bound by residues Cys-204, Cys-207, Cys-222, His-224, Cys-227, Cys-230, Cys-249, Cys-254, Cys-293, Cys-298, Cys-313, Cys-316, Cys-321, Cys-324, His-329, Cys-334, Cys-388, and Cys-391. 2 RING-type zinc fingers span residues 204–249 (CGIC…CLNC) and 204–254 (CGIC…EPKC). Residues 273-334 (ARYDRLLLQS…RRSYHGLSHC (62 aa)) form an IBR-type zinc finger. Residues 388–417 (CPCCGTNIQKAHGCNKMTCSSCQKYFCWIC) form an RING-type 2; atypical zinc finger. Cys-401 is a catalytic residue. Zn(2+)-binding residues include Cys-406, Cys-409, Cys-414, Cys-417, His-429, and Cys-437.

This sequence belongs to the RBR family. RNF14 subfamily.

The protein localises to the cytoplasm. Its subcellular location is the nucleus. It catalyses the reaction [E2 ubiquitin-conjugating enzyme]-S-ubiquitinyl-L-cysteine + [acceptor protein]-L-lysine = [E2 ubiquitin-conjugating enzyme]-L-cysteine + [acceptor protein]-N(6)-ubiquitinyl-L-lysine.. It participates in protein modification; protein ubiquitination. Its function is as follows. E3 ubiquitin-protein ligase that plays a key role in the RNF14-RNF25 translation quality control pathway, a pathway that takes place when a ribosome has stalled during translation, and which promotes ubiquitination and degradation of translation factors on stalled ribosomes. Recruited to stalled ribosomes by the ribosome collision sensor GCN1 and mediates 'Lys-6'-linked ubiquitination of target proteins, leading to their degradation. Mediates ubiquitination of eef1a1/eEF1A and etf1/eRF1 translation factors on stalled ribosomes, leading to their degradation. Specifically required to resolve RNA-protein cross-links caused by reactive aldehydes, which trigger translation stress by stalling ribosomes: acts by catalying 'Lys-6'-linked ubiquitination of RNA-protein cross-links, leading to their removal by the ATP-dependent unfoldase VCP and subsequent degradation by the proteasome. Independently of its function in the response to stalled ribosomes, acts as a regulator of transcription in Wnt signaling via its interaction with TCF transcription factors (tcf7/tcf1, tcf7l1/tcf3 and tcf7l2/tcf4). This Danio rerio (Zebrafish) protein is E3 ubiquitin-protein ligase RNF14.